The following is a 431-amino-acid chain: Glutamate-1-semialdehyde 2,1-aminomutase (431 aa).

Lys269 is modified (N6-(pyridoxal phosphate)lysine).

The protein belongs to the class-III pyridoxal-phosphate-dependent aminotransferase family. HemL subfamily. In terms of assembly, homodimer. It depends on pyridoxal 5'-phosphate as a cofactor.

The protein localises to the cytoplasm. It catalyses the reaction (S)-4-amino-5-oxopentanoate = 5-aminolevulinate. Its pathway is porphyrin-containing compound metabolism; protoporphyrin-IX biosynthesis; 5-aminolevulinate from L-glutamyl-tRNA(Glu): step 2/2. This is Glutamate-1-semialdehyde 2,1-aminomutase from Francisella tularensis subsp. holarctica (strain LVS).